The following is a 248-amino-acid chain: 1,2-phenylacetyl-CoA epoxidase, subunit C (248 aa).

Residues 76-79 and 177-179 contribute to the substrate site; these read QFSN and IAL.

Forms a stable heterotetramer (dimer of heterodimers) with PaaA and a stable heterodimer with PaaB.

Its pathway is aromatic compound metabolism; phenylacetate degradation. Functionally, component of 1,2-phenylacetyl-CoA epoxidase multicomponent enzyme system which catalyzes the reduction of phenylacetyl-CoA (PA-CoA) to form 1,2-epoxyphenylacetyl-CoA. The subunit C may be essential for structural integrity of the alpha subunit. The protein is 1,2-phenylacetyl-CoA epoxidase, subunit C (paaC) of Escherichia coli (strain K12).